A 38-amino-acid chain; its full sequence is Small ribosomal subunit protein uS12c (38 aa).

A disordered region spans residues 1-26; it reads MPTIQQLIRNARQPIENRKKSPALRG.

The protein belongs to the universal ribosomal protein uS12 family. As to quaternary structure, part of the 30S ribosomal subunit.

It localises to the plastid. Its subcellular location is the chloroplast. With S4 and S5 plays an important role in translational accuracy. Located at the interface of the 30S and 50S subunits. In Pinus contorta (Shore pine), this protein is Small ribosomal subunit protein uS12c (rps12).